Here is a 364-residue protein sequence, read N- to C-terminus: MDFFYIGVMSGSSLDGIDIALLKQDDRSRLLATHYIPMPEDLHAELLGLCSSGVDELARAAIAEQKWCRLVAQGVQTLLEDQNMVPAQIRAIGSHGQTIRHEPARGYSIQIGNPALLAELTEITVVSDFRRRDIAAGGQGAPLVPAFHEALFDDNKDHRAVLNIGGFSNLSLIESDRPVEGFDCGPGNVLLDAWIQSQRHESYDKDGEWAASGEVDQALLQKLLSDQFFLTKGPKSTGREVFNLGWVHHHLFQLPTLTPEDVQATLLELTALTITESLQSAQAITKELLVCGGGAHNKALMKRLAELLPDTEVSSTEKFGVDPDWVEAMAFAWLAHCCLEGVPANRPTVTGAKGRRVLGAIYPA.

11–18 contacts ATP; that stretch reads GSSLDGID.

Belongs to the anhydro-N-acetylmuramic acid kinase family.

The enzyme catalyses 1,6-anhydro-N-acetyl-beta-muramate + ATP + H2O = N-acetyl-D-muramate 6-phosphate + ADP + H(+). It functions in the pathway amino-sugar metabolism; 1,6-anhydro-N-acetylmuramate degradation. Its pathway is cell wall biogenesis; peptidoglycan recycling. Catalyzes the specific phosphorylation of 1,6-anhydro-N-acetylmuramic acid (anhMurNAc) with the simultaneous cleavage of the 1,6-anhydro ring, generating MurNAc-6-P. Is required for the utilization of anhMurNAc either imported from the medium or derived from its own cell wall murein, and thus plays a role in cell wall recycling. This is Anhydro-N-acetylmuramic acid kinase from Pseudomonas savastanoi pv. phaseolicola (strain 1448A / Race 6) (Pseudomonas syringae pv. phaseolicola (strain 1448A / Race 6)).